An 835-amino-acid chain; its full sequence is Ribonucleoside-diphosphate reductase large subunit (835 aa).

A disordered region spans residues 1–39; the sequence is MPPRAPRPAGAVSPPFPPLAGPPLKARAPRARDSPLTSP. Substrate-binding positions include Thr262, 277-278, Gly308, 489-493, and 666-670; these read SC, NLCTE, and PTVSS. A disulfide bridge connects residues Cys278 and Cys506. Asn489 (proton acceptor) is an active-site residue. Cys491 functions as the Cysteine radical intermediate in the catalytic mechanism. The active-site Proton acceptor is the Glu493.

This sequence belongs to the ribonucleoside diphosphate reductase large chain family. Heterotetramer composed of a homodimer of the large subunit (R1) and a homodimer of the small subunit (R2). Larger multisubunit protein complex are also active, composed of (R1)n(R2)n.

It catalyses the reaction a 2'-deoxyribonucleoside 5'-diphosphate + [thioredoxin]-disulfide + H2O = a ribonucleoside 5'-diphosphate + [thioredoxin]-dithiol. Functionally, ribonucleoside-diphosphate reductase holoenzyme provides the precursors necessary for viral DNA synthesis. Allows virus growth in non-dividing cells, as well as reactivation from latency in infected hosts. Catalyzes the biosynthesis of deoxyribonucleotides from the corresponding ribonucleotides. The chain is Ribonucleoside-diphosphate reductase large subunit from Suid herpesvirus 1 (strain Kaplan) (SuHV-1).